The primary structure comprises 293 residues: Putative serine protease 42 (293 aa).

Positions 1–26 are cleaved as a signal peptide; that stretch reads MSSGGGSRGLLAWLLLLQPWPGQNWA. The disordered stretch occupies residues 33–60; sequence LPSPLLSEEGGENPEASPAPGPEAGPPL. The Peptidase S1 domain occupies 80-293; sequence IVGGVDAEEG…IVSWGIGCGR (214 aa). Cysteines 105 and 121 form a disulfide. The active-site Charge relay system is His-120. Asn-141 carries an N-linked (GlcNAc...) asparagine glycan. Asp-166 functions as the Charge relay system in the catalytic mechanism. N-linked (GlcNAc...) asparagine glycosylation is present at Asn-177. Cystine bridges form between Cys-200–Cys-273, Cys-232–Cys-253, and Cys-263–Cys-291. Ser-267 functions as the Charge relay system in the catalytic mechanism. Asn-276 carries N-linked (GlcNAc...) asparagine glycosylation.

The protein belongs to the peptidase S1 family.

The protein localises to the cytoplasm. It localises to the cell membrane. Its function is as follows. Plays a role in spermatogenesis. Involved in germ cell survival during meiosis. This Homo sapiens (Human) protein is Putative serine protease 42.